The sequence spans 133 residues: Small ribosomal subunit protein uS11 (133 aa).

This sequence belongs to the universal ribosomal protein uS11 family. Part of the 30S ribosomal subunit. Interacts with proteins S7 and S18. Binds to IF-3.

Its function is as follows. Located on the platform of the 30S subunit, it bridges several disparate RNA helices of the 16S rRNA. Forms part of the Shine-Dalgarno cleft in the 70S ribosome. The polypeptide is Small ribosomal subunit protein uS11 (Ralstonia pickettii (strain 12J)).